The primary structure comprises 604 residues: MCGIMGAVSERDISKILLEGLRRLEYRGYDSAGIAVIDSQDRLKRVRIQGKVQNLADAMQETAIAGNTGIAHTRWATHGKPSEQNAHPHLSHGEIALVHNGIIENHEHLRQQLITYGYQFTSETDTEVAAHLIHYHYQQHENLLLAVQKAAAEMQGAFALGVIHQKRPEELVAIRKGSPLVLGFGIGENFIASDALALRSFAQSVIYMEEGDSACVTTQDIKVYDSNRILVQRAVHPLNSDSEIVNKGPYRHFMLKEIFEQSKVITDTLESRINSIDVLRASFGEKASHIFPVVKNIHIVACGTSYHAGMIAKYWLESLAGLPTQVEIASEYRYRDVVVPDNTLFITVSQSGETADTLAALFKAKQSNYLASLAICNVATSTLVREADCVFLTRAGIEIGVASTKAFTTQLAAFLMLAAALCKDNRAQEVLRQLQELPACCERVLQMNEEVESLASLFVNKVHALFLGRGVQYPVALEGALKLKEISYIHAEAYPAGELKHGPLALVDKDMPVIAVAPNDELLDKLKSNLHEVSARGGQLFVFVDDSQNWKANGARLIKVPSCGAWLAPIVYTIPLQLLAYHVAVAKGTDVDQPRNLAKSVTVE.

The Nucleophile; for GATase activity role is filled by Cys2. The Glutamine amidotransferase type-2 domain maps to 2 to 219 (CGIMGAVSER…EGDSACVTTQ (218 aa)). SIS domains follow at residues 279–427 (LRAS…DNRA) and 454–594 (LASL…VDQP). The active-site For Fru-6P isomerization activity is Lys599.

Homodimer.

Its subcellular location is the cytoplasm. It carries out the reaction D-fructose 6-phosphate + L-glutamine = D-glucosamine 6-phosphate + L-glutamate. Its function is as follows. Catalyzes the first step in hexosamine metabolism, converting fructose-6P into glucosamine-6P using glutamine as a nitrogen source. This chain is Glutamine--fructose-6-phosphate aminotransferase [isomerizing], found in Legionella pneumophila subsp. pneumophila (strain Philadelphia 1 / ATCC 33152 / DSM 7513).